The following is a 1241-amino-acid chain: eIF-2-alpha kinase GCN2 (1241 aa).

A compositionally biased stretch (basic residues) spans 1–15; sequence MGRSSSKKKKKRGGS. The disordered stretch occupies residues 1-33; the sequence is MGRSSSKKKKKRGGSGRRGQLKDHGSNADEDNE. In terms of domain architecture, RWD spans 37-148; that stretch reads EEITALSAIF…EAAQEFLSEI (112 aa). The segment at 253-321 is disordered; sequence PIAKLNTVQE…SLGSWSSDSL (69 aa). Composition is skewed to low complexity over residues 267–276 and 307–321; these read DTSISSFDSS and NSES…SDSL. The region spanning 425 to 731 is the Protein kinase domain; sequence FEELKPLGQG…ATELLKHAFP (307 aa). ATP is bound by residues 431-439 and K454; that span reads LGQGGFGHV. D586 (proton acceptor) is an active-site residue. Positions 819-1219 are histidyl-tRNA synthetase-like; the sequence is IPMRLLSDCP…ELKKEKVVGR (401 aa).

Belongs to the protein kinase superfamily. Ser/Thr protein kinase family. GCN2 subfamily. In terms of assembly, homodimer; homodimerization is important for kinase activation by uncharged tRNAs. As to expression, expressed in roots, leaves, stems, buds, flowers, siliques and seedlings.

Its subcellular location is the cytoplasm. It catalyses the reaction L-seryl-[protein] + ATP = O-phospho-L-seryl-[protein] + ADP + H(+). It carries out the reaction L-threonyl-[protein] + ATP = O-phospho-L-threonyl-[protein] + ADP + H(+). Its activity is regulated as follows. The kinase activity is stimulated upon binding to uncharged tRNAs. Its function is as follows. Metabolic-stress sensing protein kinase that phosphorylates the alpha subunit of eukaryotic translation initiation factor 2 eIF-2-alpha in response to low amino acid availability. Plays a role as an activator of the general amino acid control pathway required for adapatation to amino acid starvation. Converts phosphorylated eIF-2-alpha either to a competitive inhibitor of translation initiation, leading to a global protein synthesis repression, and thus to a reduced overall utilization of amino acids, or to a translational initiation activation of specific mRNAs, and hence allowing reprogramming of amino acid biosynthetic gene expression to alleviate nutrient depletion. Binds uncharged tRNAs. The chain is eIF-2-alpha kinase GCN2 from Arabidopsis thaliana (Mouse-ear cress).